Reading from the N-terminus, the 166-residue chain is Transcription antitermination protein NusB (166 aa).

Residues 1–15 (MISDDSDRFNPRDPK) show a composition bias toward basic and acidic residues. The tract at residues 1 to 30 (MISDDSDRFNPRDPKPANAGKPSKSAKRRE) is disordered.

Belongs to the NusB family.

Involved in transcription antitermination. Required for transcription of ribosomal RNA (rRNA) genes. Binds specifically to the boxA antiterminator sequence of the ribosomal RNA (rrn) operons. This is Transcription antitermination protein NusB from Pseudomonas fluorescens (strain ATCC BAA-477 / NRRL B-23932 / Pf-5).